Here is a 245-residue protein sequence, read N- to C-terminus: 4-hydroxy-tetrahydrodipicolinate reductase (245 aa).

Residues 7–12 (GAKGKV), 75–77 (GTT), and 102–105 (APNF) contribute to the NAD(+) site. Residue His132 is the Proton donor/acceptor of the active site. His133 lines the (S)-2,3,4,5-tetrahydrodipicolinate pocket. Lys136 functions as the Proton donor in the catalytic mechanism. 142 to 143 (GT) contacts (S)-2,3,4,5-tetrahydrodipicolinate.

Belongs to the DapB family.

It is found in the cytoplasm. It catalyses the reaction (S)-2,3,4,5-tetrahydrodipicolinate + NAD(+) + H2O = (2S,4S)-4-hydroxy-2,3,4,5-tetrahydrodipicolinate + NADH + H(+). It carries out the reaction (S)-2,3,4,5-tetrahydrodipicolinate + NADP(+) + H2O = (2S,4S)-4-hydroxy-2,3,4,5-tetrahydrodipicolinate + NADPH + H(+). The protein operates within amino-acid biosynthesis; L-lysine biosynthesis via DAP pathway; (S)-tetrahydrodipicolinate from L-aspartate: step 4/4. Catalyzes the conversion of 4-hydroxy-tetrahydrodipicolinate (HTPA) to tetrahydrodipicolinate. This is 4-hydroxy-tetrahydrodipicolinate reductase from Mycobacterium marinum (strain ATCC BAA-535 / M).